A 516-amino-acid chain; its full sequence is L-amino-acid oxidase (516 aa).

The N-terminal stretch at 1–18 (MNVFFMFSLLFLAALGSC) is a signal peptide. Cysteines 28 and 189 form a disulfide. FAD is bound by residues 61–62 (MA), 81–82 (EA), arginine 89, and 103–106 (GPMR). Residues arginine 106 and histidine 239 each contribute to the substrate site. Valine 279 lines the FAD pocket. A disulfide bond links cysteine 349 and cysteine 430. The N-linked (GlcNAc...) asparagine glycan is linked to asparagine 379. Tyrosine 390 contacts substrate. Residues glutamate 475 and 482-487 (GWIDST) each bind FAD. 482–483 (GW) lines the substrate pocket.

It belongs to the flavin monoamine oxidase family. FIG1 subfamily. In terms of assembly, homodimer; non-covalently linked. The cofactor is FAD. Post-translationally, N-glycosylated. In terms of tissue distribution, expressed by the venom gland.

The protein localises to the secreted. It carries out the reaction an L-alpha-amino acid + O2 + H2O = a 2-oxocarboxylate + H2O2 + NH4(+). The enzyme catalyses L-leucine + O2 + H2O = 4-methyl-2-oxopentanoate + H2O2 + NH4(+). The catalysed reaction is L-phenylalanine + O2 + H2O = 3-phenylpyruvate + H2O2 + NH4(+). It catalyses the reaction L-methionine + O2 + H2O = 4-methylsulfanyl-2-oxobutanoate + H2O2 + NH4(+). It carries out the reaction L-arginine + O2 + H2O = 5-guanidino-2-oxopentanoate + H2O2 + NH4(+). Catalyzes an oxidative deamination of predominantly hydrophobic and aromatic L-amino acids, thus producing hydrogen peroxide that may contribute to the diverse toxic effects of this enzyme. Is active on L-Arg, L-Phe, L-Met, and L-Leu and is weakly active on L-Val. Exhibits diverse biological activities, such as hemorrhage, hemolysis, edema, apoptosis of vascular endothelial cells or tumor cell lines, antibacterial and antiparasitic activities, as well as regulation of platelet aggregation. Its effect on platelets is controversial, since it either induces aggregation or inhibits agonist-induced aggregation. These different effects are probably due to different experimental conditions. The polypeptide is L-amino-acid oxidase (Crotalus adamanteus (Eastern diamondback rattlesnake)).